Here is a 1098-residue protein sequence, read N- to C-terminus: Probable arabinosyltransferase B (1098 aa).

Transmembrane regions (helical) follow at residues Trp28–Val50, Leu217–Leu239, Ala271–Ile293, Leu402–Ile419, Ala434–Val456, Leu472–Phe494, Phe541–Leu558, Pro570–Phe587, Gly597–Leu619, Met626–Tyr648, Ile663–Trp685, and Leu698–Ala720.

Belongs to the emb family.

Its subcellular location is the cell membrane. In terms of biological role, arabinosyl transferase responsible for the polymerization of arabinose into the arabinan of arabinogalactan. The protein is Probable arabinosyltransferase B (embB) of Mycobacterium bovis (strain ATCC BAA-935 / AF2122/97).